The chain runs to 437 residues: Phosphoglucosamine mutase (437 aa).

Catalysis depends on Ser101, which acts as the Phosphoserine intermediate. Mg(2+)-binding residues include Ser101, Asp234, Asp236, and Asp238. Ser101 is modified (phosphoserine).

The protein belongs to the phosphohexose mutase family. Mg(2+) serves as cofactor. Post-translationally, activated by phosphorylation.

It catalyses the reaction alpha-D-glucosamine 1-phosphate = D-glucosamine 6-phosphate. In terms of biological role, catalyzes the conversion of glucosamine-6-phosphate to glucosamine-1-phosphate. The polypeptide is Phosphoglucosamine mutase (Thermus thermophilus (strain ATCC BAA-163 / DSM 7039 / HB27)).